Here is a 215-residue protein sequence, read N- to C-terminus: Adenylate kinase (215 aa).

10–15 provides a ligand contact to ATP; sequence GAGKGT. The tract at residues 30-59 is NMP; that stretch reads STGDMLRAAVKAGTPIGLKAKAVMEAGELV. Residues threonine 31, arginine 36, 57–59, 85–88, and glutamine 92 each bind AMP; these read ELV and GYPR. An LID region spans residues 126 to 163; that stretch reads GRYTCANCGEGYHDRFKQPKVAGVCDVCGSAEFKRRPD. Arginine 127 contributes to the ATP binding site. The Zn(2+) site is built by cysteine 130, cysteine 133, cysteine 150, and cysteine 153. Residues arginine 160 and arginine 172 each contribute to the AMP site. Alanine 200 serves as a coordination point for ATP.

Belongs to the adenylate kinase family. In terms of assembly, monomer.

It is found in the cytoplasm. The catalysed reaction is AMP + ATP = 2 ADP. It participates in purine metabolism; AMP biosynthesis via salvage pathway; AMP from ADP: step 1/1. Its function is as follows. Catalyzes the reversible transfer of the terminal phosphate group between ATP and AMP. Plays an important role in cellular energy homeostasis and in adenine nucleotide metabolism. The protein is Adenylate kinase of Rhizorhabdus wittichii (strain DSM 6014 / CCUG 31198 / JCM 15750 / NBRC 105917 / EY 4224 / RW1) (Sphingomonas wittichii).